The sequence spans 118 residues: Group 1 truncated hemoglobin GlbN (118 aa).

A heme-binding site is contributed by H70.

Belongs to the truncated hemoglobin family. Group I subfamily. In terms of assembly, monomer. It depends on heme as a cofactor.

Its subcellular location is the membrane. The chain is Group 1 truncated hemoglobin GlbN (glbN) from Nostoc sp. (strain MUN 8820).